The chain runs to 108 residues: ATP-dependent Clp protease adapter protein ClpS (108 aa).

Belongs to the ClpS family. Binds to the N-terminal domain of the chaperone ClpA.

In terms of biological role, involved in the modulation of the specificity of the ClpAP-mediated ATP-dependent protein degradation. The sequence is that of ATP-dependent Clp protease adapter protein ClpS from Ralstonia pickettii (strain 12J).